The primary structure comprises 212 residues: Noggin-2 (212 aa).

Residues M1 to S23 form the signal peptide. Positions L37–D56 are disordered. Over residues D47–D56 the composition is skewed to basic and acidic residues. N-linked (GlcNAc...) asparagine glycosylation is present at N84.

Belongs to the noggin family. As to quaternary structure, homodimer; disulfide-linked.

Its subcellular location is the secreted. In terms of biological role, inhibitor of bone morphogenetic proteins (BMP) signaling. This Danio rerio (Zebrafish) protein is Noggin-2 (nog2).